The primary structure comprises 210 residues: Endo-1,4-beta-xylanase A (210 aa).

A signal peptide spans Met-1–Gly-19. Residues Leu-20–Trp-210 enclose the GH11 domain. Residue Glu-104 is the Nucleophile of the active site. Glu-197 (proton donor) is an active-site residue.

The protein belongs to the glycosyl hydrolase 11 (cellulase G) family.

It catalyses the reaction Endohydrolysis of (1-&gt;4)-beta-D-xylosidic linkages in xylans.. The protein operates within glycan degradation; xylan degradation. The polypeptide is Endo-1,4-beta-xylanase A (xynA) (Geobacillus stearothermophilus (Bacillus stearothermophilus)).